The following is a 358-amino-acid chain: Hsp70/Hsp90 co-chaperone cns1 (358 aa).

4 TPR repeats span residues 64–97 (AQNF…KCGD), 102–135 (IACY…DSTH), 136–169 (AKAY…HPND), and 221–255 (TEHP…YPLV).

This sequence belongs to the TTC4 family. In terms of assembly, monomer. Component of Hsp70 and Hsp90 chaperone complexes.

It localises to the cytoplasm. The protein resides in the nucleus. Functionally, co-chaperone that binds to the molecular chaperones Hsp90 and Hsp70. Stimulates Hsp70 ATPase activity, but not Hsp90 ATPase activity. Involved in only a subset of Hsp90 functions. In Schizosaccharomyces pombe (strain 972 / ATCC 24843) (Fission yeast), this protein is Hsp70/Hsp90 co-chaperone cns1 (cns1).